We begin with the raw amino-acid sequence, 179 residues long: UPF0200 protein TV0279 (179 aa).

ATP is bound at residue 6–13 (GMPGAGKD).

The protein belongs to the UPF0200 family.

The chain is UPF0200 protein TV0279 from Thermoplasma volcanium (strain ATCC 51530 / DSM 4299 / JCM 9571 / NBRC 15438 / GSS1).